A 198-amino-acid polypeptide reads, in one-letter code: uncharacterized protein (198 aa).

This is an uncharacterized protein from Bacillus subtilis (strain 168).